Reading from the N-terminus, the 312-residue chain is Olfactory receptor 6X1 (312 aa).

Over methionine 1 to threonine 23 the chain is Extracellular. An N-linked (GlcNAc...) asparagine glycan is attached at asparagine 3. Residues proline 24–isoleucine 44 traverse the membrane as a helical segment. Residues alanine 45 to arginine 52 lie on the Cytoplasmic side of the membrane. Residues leucine 53–threonine 73 traverse the membrane as a helical segment. Over threonine 74–leucine 97 the chain is Extracellular. Cysteine 95 and cysteine 187 are oxidised to a cystine. Residues glutamine 98 to phenylalanine 118 form a helical membrane-spanning segment. The Cytoplasmic segment spans residues aspartate 119 to lysine 137. Residues leucine 138–threonine 158 form a helical membrane-spanning segment. Topologically, residues methionine 159 to leucine 195 are extracellular. A helical membrane pass occupies residues leucine 196–serine 215. Residues tyrosine 216 to threonine 235 lie on the Cytoplasmic side of the membrane. A helical membrane pass occupies residues phenylalanine 236–methionine 256. The Extracellular segment spans residues tyrosine 257–asparagine 269. A helical membrane pass occupies residues lysine 270–isoleucine 290. Over arginine 291 to lysine 312 the chain is Cytoplasmic.

This sequence belongs to the G-protein coupled receptor 1 family.

It localises to the cell membrane. Functionally, odorant receptor. The polypeptide is Olfactory receptor 6X1 (OR6X1) (Homo sapiens (Human)).